The sequence spans 525 residues: Zwittermicin A synthase ZmaJ (525 aa).

This sequence belongs to the ATP-dependent AMP-binding enzyme family.

The catalysed reaction is holo-[peptidyl-carrier protein] + L-serine + ATP = L-seryl-[peptidyl-carrier protein] + AMP + diphosphate. The protein operates within antibiotic biosynthesis. Functionally, involved in the biosynthesis of the linear aminopolyol antibiotic zwittermicin A (ZmA). Specifically adenylates L-serine and loads it onto the holo form of ZmaH via a thioester linkage to the phosphopanthetheine moiety. The chain is Zwittermicin A synthase ZmaJ from Bacillus cereus.